Reading from the N-terminus, the 270-residue chain is (+)-cis,cis-nepetalactol synthase NEPS3 (270 aa).

NAD(+) is bound by residues Gly-21–Gly-27, Asp-46–Gln-48, Asp-70–Val-71, Asn-97, Tyr-165–Lys-169, and Val-198–Leu-202.

It belongs to the short-chain dehydrogenases/reductases (SDR) family. Forms homotetramers.

The enzyme catalyses (S)-8-oxocitronellyl enol = cis-cis-nepetalactol. Functionally, functions as a non-oxidoreductive cyclase to promote the formation of cis-cis-nepetalactol. Cis-cis-nepetalactol is then oxidized by NEPS1 into cis-cis-nepetalactone, which belongs to a family of metabolites that are both insect-repellent and have euphoric effect in cats. Binds NAD(+) as classical short-chain dehydrogenase/reductase (SDR), but does not utilize it for its redox-neutral cyclase activity. This chain is (+)-cis,cis-nepetalactol synthase NEPS3, found in Nepeta racemosa (Catmint).